The chain runs to 428 residues: Light-independent protochlorophyllide reductase subunit N (428 aa).

Residues C31, C56, and C117 each coordinate [4Fe-4S] cluster.

Belongs to the BchN/ChlN family. In terms of assembly, protochlorophyllide reductase is composed of three subunits; BchL, BchN and BchB. Forms a heterotetramer of two BchB and two BchN subunits. Requires [4Fe-4S] cluster as cofactor.

The enzyme catalyses chlorophyllide a + oxidized 2[4Fe-4S]-[ferredoxin] + 2 ADP + 2 phosphate = protochlorophyllide a + reduced 2[4Fe-4S]-[ferredoxin] + 2 ATP + 2 H2O. It participates in porphyrin-containing compound metabolism; bacteriochlorophyll biosynthesis (light-independent). Functionally, component of the dark-operative protochlorophyllide reductase (DPOR) that uses Mg-ATP and reduced ferredoxin to reduce ring D of protochlorophyllide (Pchlide) to form chlorophyllide a (Chlide). This reaction is light-independent. The NB-protein (BchN-BchB) is the catalytic component of the complex. The chain is Light-independent protochlorophyllide reductase subunit N from Rhodopseudomonas palustris (strain BisB5).